A 213-amino-acid chain; its full sequence is MGAGALGVVAMVAAAVVVAMAGANSEGDALSALRRSLRDPGGVLQSWDPTLVNPCTWFHVTCDRDNRVTRLDLGNLNLSGHLVPELGKLDHLQYLELYKNNIQGTIPSELGNLKNLISLDLYKNNISGTIPPTLGKLTSLVFLRLNGNRLTGPIPRELAGISSLKVVDVSSNDLCGTIPTSGPFEHIPLSNFEKNPRLEGPELQGLAVYDTNC.

The N-terminal stretch at 1-21 (MGAGALGVVAMVAAAVVVAMA) is a signal peptide. LRR repeat units lie at residues 90 to 113 (DHLQ…LGNL), 115 to 137 (NLIS…LGKL), 138 to 161 (TSLV…LAGI), and 163 to 186 (SLKV…PFEH).

Interacts with HIR1.

The protein resides in the early endosome membrane. It is found in the late endosome membrane. The protein localises to the cell membrane. Its function is as follows. Involved in plant defense response. This is Leucine-rich repeat protein 1 from Oryza sativa subsp. indica (Rice).